Consider the following 244-residue polypeptide: Flavin-dependent thymidylate synthase (244 aa).

The region spanning 7–199 (PRVFLIASWG…PNLARLVWED (193 aa)) is the ThyX domain. FAD contacts are provided by residues serine 60 and 83 to 85 (RHR). DUMP contacts are provided by residues 80-83 (QFIR), 93-95 (SQR), and arginine 137. A ThyX motif motif is present at residues 83-93 (RHRMASYWSES). FAD is bound by residues 153–155 (NAR) and asparagine 160. Position 165 (arginine 165) interacts with dUMP. The Involved in ionization of N3 of dUMP, leading to its activation role is filled by arginine 165.

Belongs to the thymidylate synthase ThyX family. Homotetramer. It depends on FAD as a cofactor.

The enzyme catalyses dUMP + (6R)-5,10-methylene-5,6,7,8-tetrahydrofolate + NADPH + H(+) = dTMP + (6S)-5,6,7,8-tetrahydrofolate + NADP(+). Its pathway is pyrimidine metabolism; dTTP biosynthesis. Catalyzes the reductive methylation of 2'-deoxyuridine-5'-monophosphate (dUMP) to 2'-deoxythymidine-5'-monophosphate (dTMP) while utilizing 5,10-methylenetetrahydrofolate (mTHF) as the methyl donor, and NADPH and FADH(2) as the reductant. This Pyrobaculum aerophilum (strain ATCC 51768 / DSM 7523 / JCM 9630 / CIP 104966 / NBRC 100827 / IM2) protein is Flavin-dependent thymidylate synthase.